We begin with the raw amino-acid sequence, 793 residues long: Alanine--tRNA ligase, mitochondrial (793 aa).

Residues arginine 88, tryptophan 187, and 224-226 contribute to the ATP site; that span reads IWN. Residues asparagine 226 and aspartate 249 each coordinate L-alanine. ATP is bound at residue glycine 253. Zn(2+)-binding residues include histidine 594, histidine 598, cysteine 706, and histidine 710.

This sequence belongs to the class-II aminoacyl-tRNA synthetase family. As to quaternary structure, monomer. Zn(2+) is required as a cofactor.

The protein localises to the mitochondrion. It carries out the reaction tRNA(Ala) + L-alanine + ATP = L-alanyl-tRNA(Ala) + AMP + diphosphate. Its function is as follows. Catalyzes the attachment of alanine to tRNA(Ala) in a two-step reaction: alanine is first activated by ATP to form Ala-AMP and then transferred to the acceptor end of tRNA(Ala). Also edits incorrectly charged tRNA(Ala) via its editing domain. This Caenorhabditis elegans protein is Alanine--tRNA ligase, mitochondrial.